The chain runs to 327 residues: Malate dehydrogenase (327 aa).

Residue 11–17 (GAAGQIS) coordinates NAD(+). Arg-92 and Arg-98 together coordinate substrate. NAD(+) is bound by residues Asn-105, Gln-112, and 129 to 131 (VGN). Substrate-binding residues include Asn-131 and Arg-162. The active-site Proton acceptor is His-187.

The protein belongs to the LDH/MDH superfamily. MDH type 2 family.

It carries out the reaction (S)-malate + NAD(+) = oxaloacetate + NADH + H(+). Catalyzes the reversible oxidation of malate to oxaloacetate. In Nitrosomonas europaea (strain ATCC 19718 / CIP 103999 / KCTC 2705 / NBRC 14298), this protein is Malate dehydrogenase.